Here is a 123-residue protein sequence, read N- to C-terminus: Inter-alpha-trypsin inhibitor (123 aa).

2 consecutive BPTI/Kunitz inhibitor domains span residues 5 to 55 and 61 to 111; these read CQLG…LQTC and CNLP…KEYC. 6 disulfides stabilise this stretch: C5-C55, C14-C38, C30-C51, C61-C111, C70-C94, and C86-C107. N24 carries N-linked (GlcNAc...) asparagine glycosylation.

The protein localises to the secreted. This inhibitory fragment, released from native ITI after limited proteolysis with trypsin, contains two homologous domains. Whereas the second domain is a strong inhibitor of trypsin, the first domain interacts weakly with PMN-granulocytic elastase and not at all with pancreatic elastase. The sequence is that of Inter-alpha-trypsin inhibitor from Capra hircus (Goat).